The primary structure comprises 72 residues: MPQNSKYSDTQFENVMHDIIIALEKHQASRDLSLMALGNVITNIFMQQVNESQRSEMADKFTQVLLKSINAK.

This sequence belongs to the UPF0352 family.

The protein is UPF0352 protein Patl_3379 of Pseudoalteromonas atlantica (strain T6c / ATCC BAA-1087).